The chain runs to 155 residues: 6,7-dimethyl-8-ribityllumazine synthase (155 aa).

5-amino-6-(D-ribitylamino)uracil contacts are provided by residues Trp-24, 58–60 (AFE), and 82–84 (AVI). 87–88 (GT) is a binding site for (2S)-2-hydroxy-3-oxobutyl phosphate. His-90 (proton donor) is an active-site residue. Residue Phe-115 coordinates 5-amino-6-(D-ribitylamino)uracil. Arg-129 lines the (2S)-2-hydroxy-3-oxobutyl phosphate pocket.

The protein belongs to the DMRL synthase family. As to quaternary structure, forms an icosahedral capsid composed of 60 subunits, arranged as a dodecamer of pentamers.

It carries out the reaction (2S)-2-hydroxy-3-oxobutyl phosphate + 5-amino-6-(D-ribitylamino)uracil = 6,7-dimethyl-8-(1-D-ribityl)lumazine + phosphate + 2 H2O + H(+). It participates in cofactor biosynthesis; riboflavin biosynthesis; riboflavin from 2-hydroxy-3-oxobutyl phosphate and 5-amino-6-(D-ribitylamino)uracil: step 1/2. Its function is as follows. Catalyzes the formation of 6,7-dimethyl-8-ribityllumazine by condensation of 5-amino-6-(D-ribitylamino)uracil with 3,4-dihydroxy-2-butanone 4-phosphate. This is the penultimate step in the biosynthesis of riboflavin. The chain is 6,7-dimethyl-8-ribityllumazine synthase from Teredinibacter turnerae (strain ATCC 39867 / T7901).